We begin with the raw amino-acid sequence, 312 residues long: Acetyl-coenzyme A carboxylase carboxyl transferase subunit beta (312 aa).

In terms of domain architecture, CoA carboxyltransferase N-terminal spans 24–293; it reads LWIKCPDSGQ…PHADEVAAPP (270 aa). The disordered stretch occupies residues 286–312; it reads ADEVAAPPPPDVEGPPPAAEPVALPPA. Residues 291-312 are compositionally biased toward pro residues; sequence APPPPDVEGPPPAAEPVALPPA.

This sequence belongs to the AccD/PCCB family. As to quaternary structure, acetyl-CoA carboxylase is a heterohexamer composed of biotin carboxyl carrier protein (AccB), biotin carboxylase (AccC) and two subunits each of ACCase subunit alpha (AccA) and ACCase subunit beta (AccD).

The protein resides in the cytoplasm. It catalyses the reaction N(6)-carboxybiotinyl-L-lysyl-[protein] + acetyl-CoA = N(6)-biotinyl-L-lysyl-[protein] + malonyl-CoA. It functions in the pathway lipid metabolism; malonyl-CoA biosynthesis; malonyl-CoA from acetyl-CoA: step 1/1. Component of the acetyl coenzyme A carboxylase (ACC) complex. Biotin carboxylase (BC) catalyzes the carboxylation of biotin on its carrier protein (BCCP) and then the CO(2) group is transferred by the transcarboxylase to acetyl-CoA to form malonyl-CoA. The sequence is that of Acetyl-coenzyme A carboxylase carboxyl transferase subunit beta from Afipia carboxidovorans (strain ATCC 49405 / DSM 1227 / KCTC 32145 / OM5) (Oligotropha carboxidovorans).